We begin with the raw amino-acid sequence, 125 residues long: Small ribosomal subunit protein uS13 (125 aa).

This sequence belongs to the universal ribosomal protein uS13 family. Part of the 30S ribosomal subunit. Forms a loose heterodimer with protein S19. Forms two bridges to the 50S subunit in the 70S ribosome.

Located at the top of the head of the 30S subunit, it contacts several helices of the 16S rRNA. In the 70S ribosome it contacts the 23S rRNA (bridge B1a) and protein L5 of the 50S subunit (bridge B1b), connecting the 2 subunits; these bridges are implicated in subunit movement. Contacts the tRNAs in the A and P-sites. The chain is Small ribosomal subunit protein uS13 from Rickettsia typhi (strain ATCC VR-144 / Wilmington).